Here is a 533-residue protein sequence, read N- to C-terminus: Ribonuclease III domain-containing protein RNC1, chloroplastic (533 aa).

A chloroplast-targeting transit peptide spans 1–30 (MAPPAMAFQALALGPLPLPLPAARRRRRVR). Disordered regions lie at residues 31–57 (VLAV…NSPS) and 66–85 (RKKA…ILKP). Positions 39-53 (TPPPPPSPSSPPEPA) are enriched in pro residues. Residues 69-82 (AVSPKKKHPPRRFI) are compositionally biased toward basic residues. RNase III domains follow at residues 164–279 (LLYL…LCFG) and 411–511 (EHPR…CVYG).

In terms of assembly, interacts with RNA. Part of large ribonucleo-protein particles that contain CAF1 and/or CAF2.

The protein resides in the plastid. Its subcellular location is the chloroplast. In terms of biological role, binds specific group II introns in chloroplasts and facilitates their splicing. Acts on both subgroup IIA and subgroup IIB introns. The substrates of the subgroup II also require the CRM domain proteins CAF1 or CAF2. Binds both single-stranded and double-stranded RNA non-specifically, but lacks endonuclease activity. Required for plastid ribosome biogenesis. This chain is Ribonuclease III domain-containing protein RNC1, chloroplastic, found in Oryza sativa subsp. japonica (Rice).